A 361-amino-acid polypeptide reads, in one-letter code: tRNA/tmRNA (uracil-C(5))-methyltransferase (361 aa).

Positions 185, 213, 218, 234, and 294 each coordinate S-adenosyl-L-methionine. Residue Cys319 is the Nucleophile of the active site. The Proton acceptor role is filled by Glu353.

The protein belongs to the class I-like SAM-binding methyltransferase superfamily. RNA M5U methyltransferase family. TrmA subfamily.

The catalysed reaction is uridine(54) in tRNA + S-adenosyl-L-methionine = 5-methyluridine(54) in tRNA + S-adenosyl-L-homocysteine + H(+). It carries out the reaction uridine(341) in tmRNA + S-adenosyl-L-methionine = 5-methyluridine(341) in tmRNA + S-adenosyl-L-homocysteine + H(+). Its function is as follows. Dual-specificity methyltransferase that catalyzes the formation of 5-methyluridine at position 54 (m5U54) in all tRNAs, and that of position 341 (m5U341) in tmRNA (transfer-mRNA). In Pseudomonas putida (strain GB-1), this protein is tRNA/tmRNA (uracil-C(5))-methyltransferase.